Reading from the N-terminus, the 357-residue chain is Membrane-bound lytic murein transglycosylase C (357 aa).

Positions Met1–Ser16 are cleaved as a signal peptide. The N-palmitoyl cysteine moiety is linked to residue Cys17. Residue Cys17 is the site of S-diacylglycerol cysteine attachment.

This sequence belongs to the transglycosylase Slt family.

The protein localises to the cell outer membrane. It catalyses the reaction Exolytic cleavage of the (1-&gt;4)-beta-glycosidic linkage between N-acetylmuramic acid (MurNAc) and N-acetylglucosamine (GlcNAc) residues in peptidoglycan, from either the reducing or the non-reducing ends of the peptidoglycan chains, with concomitant formation of a 1,6-anhydrobond in the MurNAc residue.. In terms of biological role, murein-degrading enzyme. May play a role in recycling of muropeptides during cell elongation and/or cell division. The polypeptide is Membrane-bound lytic murein transglycosylase C (Pectobacterium atrosepticum (strain SCRI 1043 / ATCC BAA-672) (Erwinia carotovora subsp. atroseptica)).